The primary structure comprises 180 residues: uncharacterized protein (180 aa).

This is an uncharacterized protein from Magallana gigas (Pacific oyster).